The sequence spans 405 residues: Solute carrier family 35 member E2B (405 aa).

The disordered stretch occupies residues 1-28; it reads MSSSVKTPALEELVPGSEEKPKGRSPLS. A run of 10 helical transmembrane segments spans residues 81-101, 106-126, 142-162, 167-187, 195-215, 219-241, 264-284, 296-316, 326-346, and 347-367; these read LWFFFSFCTLFLNKYILSLLG, MLGAVQMLSTTVIGCVKTLVP, FLMTMLFVGLMRFATVVLGLV, VAVSFAETVKSSAPIFTVIMS, TGLLVNLSLIPVMGGLALCTA, SFNVLGFSAALSTNIMDCLQNVF, AAAVAMLVPARVFFTDVPVIG, VVLLLLTDGVLFHLQSVTAYA, FSVASTVKHALSIWLSVIVFG, and NKITSLSAVGTALVTVGVLLY. The disordered stretch occupies residues 380 to 405; it reads SLAAATGRAPDDTVEPLLPQDPRQHP.

This sequence belongs to the TPT transporter family. SLC35E subfamily.

It is found in the membrane. Putative transporter. The protein is Solute carrier family 35 member E2B (SLC35E2B) of Homo sapiens (Human).